The following is a 419-amino-acid chain: Hydrolase LUC6 (419 aa).

The active site involves Ser238.

It belongs to the AB hydrolase superfamily. FUS2 hydrolase family.

The protein operates within mycotoxin biosynthesis. Functionally, hydrolase; part of the gene cluster that mediates the biosynthesis of the mycotoxin lucilactaene and the lucilactaene-related compound NG-391 that act as cell cycle inhibitors with potent growth inhibitory activity against malarial parasites, moderate growth inhibitory activity against cancer cells, and no activity against bacteria and fungi. Within the pathway, LUC6 may catalyze the 2-pyrrolidone ring formation to form prelucilactaene C from prelucilactaene B, followed by C-15 hydroxylation by the same enzyme to give prelucilactaene D, epoxydation to yield prelucilactaene E, and finally cyclization to yield prelucilactaene F. The pathway begins with the hybrid PKS-NRPS synthetase LUC5 which is responsible for the condensation of one acetyl-coenzyme A (CoA) unit with six malonyl-CoA units and the amide linkage of the arising heptaketide and homoserine, subsequently releasing the first intermediate prelucilactaene B. Both the cytochrome P450 monooxygenase LUC2 and the hydrolase LUC6 function in parallel in modification of prelucilactaene B. LUC6 may catalyze the 2-pyrrolidone ring formation to form prelucilactaene C from prelucilactaene B, followed by C-15 hydroxylation by the same enzyme to give prelucilactaene D, which is then converted to prelucilactaene E by epoxidation, and finally to prelucilactaene F by cyclization. Prelucilactane D, prelucilactaene E, and prelucilactaene F can be converted to dihydrolucilactaene, NG391, and lucilactaene, respectively, via C-20 methyl group hydroxylation by the cytochrome P450 monooxygenase LUC2. However, LUC2, unlike FUS8 in fusarin C biosynthesis, is not enough for the full oxidation of the C-20 methyl group into carboxylic acid, which is a prerequisite for the final methylation step. The aldehyde dehydrogenase LUC3 is involved in the biosynthesis by further oxidation of the C-20 alcoholic analog prelucilactaene G into a carboxylic derivative. This unidentified carboxylic derivative may be converted to demethyllucilactaene. As the last step, the methyltransferase LUC1 methylates the hydroxyl group at C-21 of demethyllucilactaene to generate lucilactaene. This is Hydrolase LUC6 from Fusarium sp.